Here is a 285-residue protein sequence, read N- to C-terminus: Transcription factor E2F6 (285 aa).

Lys9 participates in a covalent cross-link: Glycyl lysine isopeptide (Lys-Gly) (interchain with G-Cter in SUMO2). Residues 50–129 (YVSMRKALKV…SKNHIRWIGS (80 aa)) mediate DNA binding. The DEF box signature appears at 95–129 (KLGVRKRRVYDITNVLDGIDLVEKKSKNHIRWIGS). The segment at 130 to 222 (DLSNFGAVPQ…PAPKEDSITV (93 aa)) is dimerization. A leucine-zipper region spans residues 143–164 (LQEELSDLSAMEDALDELIKDC). Residues 173 to 285 (DDKENERLAY…QSEEVLEVSN (113 aa)) are transcription repression. Residues 240 to 285 (QGSHSSNKTSDNVGTSSSKSKPLEHPQPEKEENPPQQSEEVLEVSN) are disordered. A compositionally biased stretch (polar residues) spans 241–259 (GSHSSNKTSDNVGTSSSKS). Over residues 260–272 (KPLEHPQPEKEEN) the composition is skewed to basic and acidic residues.

It belongs to the E2F/DP family. In terms of assembly, forms heterodimers with DP family members TFDP1 or TFDP2. Component of the DRTF1/E2F transcription factor complex. Part of the E2F6.com-1 complex in G0 phase composed of E2F6, MGA, MAX, TFDP1, CBX3, BAT8, EUHMTASE1, RING1, RNF2, MBLR, L3MBTL2 and YAF2. Component of some MLL1/MLL complex, at least composed of the core components KMT2A/MLL1, ASH2L, HCFC1/HCF1, WDR5 and RBBP5, as well as the facultative components BACC1, CHD8, E2F6, HSP70, INO80C, KANSL1, LAS1L, MAX, MCRS1, MGA, KAT8/MOF, PELP1, PHF20, PRP31, RING2, RUVB1/TIP49A, RUVB2/TIP49B, SENP3, TAF1, TAF4, TAF6, TAF7, TAF9 and TEX10.

Its subcellular location is the nucleus. Inhibitor of E2F-dependent transcription. Binds DNA cooperatively with DP proteins through the E2 recognition site, 5'-TTTC[CG]CGC-3'. Has a preference for the 5'-TTTCCCGC-3' E2F recognition site. E2F6 lacks the transcriptional activation and pocket protein binding domains. Appears to regulate a subset of E2F-dependent genes whose products are required for entry into the cell cycle but not for normal cell cycle progression. Represses expression of some meiosis-specific genes, including SLC25A31/ANT4. May silence expression via the recruitment of a chromatin remodeling complex containing histone H3-K9 methyltransferase activity. Overexpression delays the exit of cells from the S-phase. The polypeptide is Transcription factor E2F6 (Bos taurus (Bovine)).